The chain runs to 312 residues: Ribosomal protein L11 methyltransferase (312 aa).

Positions 163, 184, 206, and 248 each coordinate S-adenosyl-L-methionine.

The protein belongs to the methyltransferase superfamily. PrmA family.

The protein resides in the cytoplasm. It carries out the reaction L-lysyl-[protein] + 3 S-adenosyl-L-methionine = N(6),N(6),N(6)-trimethyl-L-lysyl-[protein] + 3 S-adenosyl-L-homocysteine + 3 H(+). Methylates ribosomal protein L11. The chain is Ribosomal protein L11 methyltransferase from Clostridium botulinum (strain Hall / ATCC 3502 / NCTC 13319 / Type A).